A 596-amino-acid polypeptide reads, in one-letter code: Interleukin-1 receptor-associated kinase 3 (596 aa).

The Death domain occupies 41 to 106; it reads WRGLAERLSS…RAIHLITNYG (66 aa). Ser-110 is subject to Phosphoserine; by IRAK1. Residues 165-452 form the Protein kinase domain; it reads FHKDFLIGEG…LESTQASLYF (288 aa). Residues 171 to 179, Lys-192, 295 to 298, and Asp-311 contribute to the ATP site; these read IGEGEIFEV and SSAN. A Phosphoserine modification is found at Ser-467. Residues 560-596 form a disordered region; the sequence is NIDPSSEAPGHSCRSRPVESSCSSKFSWDEYEQYKKE.

This sequence belongs to the protein kinase superfamily. TKL Ser/Thr protein kinase family. Pelle subfamily. In terms of assembly, monomer. Homodimer; disulfide-linked. May interact with IRAK4 (when phosphorylated). Interacts (when phosphorylated at Ser-110) with PIN1 (via WW domain) in response to IL33-mediated (but not TLR4 ligand LPS) dendritic cell stimulation. In terms of tissue distribution, expressed in eosinophils, dendritic cells and/or monocytes (at protein level). Expressed predominantly in peripheral blood lymphocytes.

Its subcellular location is the cytoplasm. The protein localises to the nucleus. Functionally, putative inactive protein kinase which regulates signaling downstream of immune receptors including IL1R and Toll-like receptors. Inhibits dissociation of IRAK1 and IRAK4 from the Toll-like receptor signaling complex by either inhibiting the phosphorylation of IRAK1 and IRAK4 or stabilizing the receptor complex. Upon IL33-induced lung inflammation, positively regulates expression of IL6, CSF3, CXCL2 and CCL5 mRNAs in dendritic cells. The polypeptide is Interleukin-1 receptor-associated kinase 3 (Homo sapiens (Human)).